The sequence spans 253 residues: uncharacterized protein (253 aa).

A compositionally biased stretch (basic and acidic residues) spans 200 to 209 (TGREHAHKGP). 2 disordered regions span residues 200–225 (TGRE…PNPA) and 234–253 (QHSP…SAAT).

In terms of tissue distribution, most abundantly expressed in gastrointestinal tissues. Expressed at lower levels in kidney and placenta. Expressed in fetal brain, liver, placenta, kidney and lung.

This is an uncharacterized protein from Homo sapiens (Human).